We begin with the raw amino-acid sequence, 589 residues long: ATP-dependent ubiquitin transferase-like protein Cap2 (589 aa).

Cys13 participates in a covalent cross-link: Glycyl cysteine dithioester (Cys-Gly) (interchain with G-Cter in DncV). Lys77 participates in a covalent cross-link: Glycyl lysine isopeptide (Lys-Gly) (interchain with G-Cter in DncV). Cys91 serves as the catalytic For E2-like domain. Glycyl lysine isopeptide (Lys-Gly) (interchain with G-Cter in DncV) cross-links involve residues Lys305, Lys387, and Lys484. Cys493 participates in a covalent cross-link: Glycyl cysteine dithioester (Cys-Gly) (interchain with G-Cter in DncV). Residues Cys493, Cys496, and Cys513 each act as for E1-like domain in the active site. Cys513 is covalently cross-linked (Glycyl cysteine dithioester (Cys-Gly) (interchain with G-Cter in DncV)). Residue Lys523 forms a Glycyl lysine isopeptide (Lys-Gly) (interchain with G-Cter in DncV) linkage.

This sequence in the C-terminal section; belongs to the HesA/MoeB/ThiF family. In terms of assembly, a Cap2 dimer is bound on either side by a DncV monomer. Post-translationally, conjugated to DncV via 5 different Lys residues and 3 Cys residues.

CD-NTase priming component of a CBASS antiviral system. CBASS (cyclic oligonucleotide-based antiphage signaling system) provides immunity against bacteriophages. The CD-NTase protein (DncV) synthesizes cyclic nucleotides in response to infection; these serve as specific second messenger signals. The signals activate a diverse range of effectors, leading to bacterial cell death and thus abortive phage infection. A type II-A(GA) CBASS system. In terms of biological role, conjugates DncV to itself in vitro and to other cellular proteins in vivo; conjugation requires ATP. This primes DncV, upon phage infection CdnA activates and makes cyclic nucleotides. Its function is as follows. Protects E.coli against phage infection. When capV and dncV are introduced in E.coli MG1655 there is 1000-fold protection against phage P1; protection against other phage (T2, T4, T5, T6 and lambda-vir) requires the 2 subsequent genes. In another paper the capV-dncV-cap2-cap3 operon gives 10(4)-10(5)-fold protection against phages lambda, T2, T4 and T6, about 1000-fold protection against P1 and 10-fold protection against T5. The sequence is that of ATP-dependent ubiquitin transferase-like protein Cap2 from Escherichia coli (strain TW11681).